We begin with the raw amino-acid sequence, 762 residues long: FAST kinase domain-containing protein 5, mitochondrial (762 aa).

Phosphoserine is present on Ser95. Lys506 carries the post-translational modification N6-acetyllysine. Residues 695-755 form the RAP domain; it reads LAIQFTNKNQ…RLEKLAYLHE (61 aa).

The protein belongs to the FAST kinase family. In terms of assembly, found in a complex with GRSF1, DDX28, DHX30 and FASTKD2. Associates with the 12S mitochondrial rRNA (12S mt-rRNA). As to expression, expression detected in spleen, testis, colon, heart, smooth muscle, kidney, brain, lung, liver, brown and white adipose tissue.

Its subcellular location is the mitochondrion matrix. The protein resides in the mitochondrion nucleoid. Plays an important role in the processing of non-canonical mitochondrial mRNA precursors. In Mus musculus (Mouse), this protein is FAST kinase domain-containing protein 5, mitochondrial (Fastkd5).